The following is a 307-amino-acid chain: Probable E3 SUMO-protein ligase RNF212 (307 aa).

Residues 7 to 46 (CNRCFQSPHRKSSFSLTSCGHVYCHSCLLKGTKNECVICQ) form an RING-type zinc finger. Residues 91–124 (RRRLVAFYQEKISQLEESLRKSVLQIKQLQSMRS) adopt a coiled-coil conformation. Positions 164 to 291 (LTPPARKPEM…KMSPFLPSTP (128 aa)) are disordered. Polar residues-rich tracts occupy residues 202–213 (LSLTPSHASMTK), 233–252 (SQLSSRATQGPSPSVSSSWT), and 259–271 (ISISGLLQRQCAG).

In terms of tissue distribution, specifically expressed in meiocytes of the gonads.

Its subcellular location is the nucleus. It localises to the chromosome. Its pathway is protein modification; protein sumoylation. SUMO E3 ligase that acts as a regulator of crossing-over during meiosis: required to couple chromosome synapsis to the formation of crossover-specific recombination complexes. Localizes to recombination sites and stabilizes meiosis-specific recombination factors, such as MutS-gamma complex proteins (MSH4 and MSH5) and TEX11. May mediate sumoylation of target proteins MSH4 and/or MSH5, leading to enhance their binding to recombination sites. Acts as a limiting factor for crossover designation and/or reinforcement and plays an antagonist role with CCNB1IP1/HEI10 in the regulation of meiotic recombination. This Mus musculus (Mouse) protein is Probable E3 SUMO-protein ligase RNF212 (Rnf212).